The primary structure comprises 700 residues: Polyribonucleotide nucleotidyltransferase (700 aa).

Residues D487 and D493 each contribute to the Mg(2+) site. In terms of domain architecture, KH spans 554-613 (PRLLTIKIHPDKIRDVIGKGGSTIQAITKDTGTQIDIQDDGTIVIASVNNAAAREAKRRI). Residues 623 to 691 (GRIYEGKVAK…KQGRIRLSIK (69 aa)) form the S1 motif domain.

This sequence belongs to the polyribonucleotide nucleotidyltransferase family. Component of the RNA degradosome, which is a multiprotein complex involved in RNA processing and mRNA degradation. It depends on Mg(2+) as a cofactor.

Its subcellular location is the cytoplasm. It carries out the reaction RNA(n+1) + phosphate = RNA(n) + a ribonucleoside 5'-diphosphate. Involved in mRNA degradation. Catalyzes the phosphorolysis of single-stranded polyribonucleotides processively in the 3'- to 5'-direction. In Xylella fastidiosa (strain M12), this protein is Polyribonucleotide nucleotidyltransferase.